The sequence spans 627 residues: Anti-CBASS protein Acb1 (627 aa).

Tyr105 contacts 3',3'-cGAMP. Tyr105 is a 3',3'-cUAMP binding site. Residues 437-474 are disordered; the sequence is LADQPETESANENTEQPESGEEGEEGQPTRRAANDAKP. Catalysis depends on residues His508, Thr510, His584, and Thr586. The 3',3'-cGAMP site is built by Glu614 and Trp620. 3',3'-cUAMP-binding residues include Glu614 and Trp620.

Belongs to the anti-CBASS protein Acb1 family.

The enzyme catalyses 3',3'-cUAMP + H2O = U[3'-5']pAp[3'] + H(+). The catalysed reaction is 3',3',3'-c-tri-AMP + H2O = A[3'-5']pA[3'-5']pAp[3'] + H(+). It carries out the reaction 3',3',3'-cAAG + H2O = G[3'-5']pA[3'-5']pAp[3'] + H(+). It catalyses the reaction 3',3',3'-cAAG + H2O = A[3'-5']pG[3'-5']pAp[3'] + H(+). The enzyme catalyses 3',3'-cGAMP + H2O = G[3'-5']pAp[3'] + H(+). Counteracts or regulates the endogenous CBASS antiviral defense system. Phosphodiesterase that enables metal-independent hydrolysis of the host cyclic di- and trinucleotide CBASS signals such as 3'3'-cGAMP, 3'3'cUA, and 3'3'3'-cAAA. The sequence is that of Anti-CBASS protein Acb1 from Caulobacter sp. (strain RHG1).